Consider the following 143-residue polypeptide: Ribulose bisphosphate carboxylase large chain (143 aa).

The propeptide occupies 1-2 (MS). The residue at position 3 (Pro-3) is an N-acetylproline. At Lys-14 the chain carries N6,N6,N6-trimethyllysine. Xaa-123 serves as a coordination point for substrate.

Belongs to the RuBisCO large chain family. Type I subfamily. Heterohexadecamer of 8 large chains and 8 small chains.

The protein resides in the plastid. It is found in the chloroplast. The enzyme catalyses 2 (2R)-3-phosphoglycerate + 2 H(+) = D-ribulose 1,5-bisphosphate + CO2 + H2O. It catalyses the reaction D-ribulose 1,5-bisphosphate + O2 = 2-phosphoglycolate + (2R)-3-phosphoglycerate + 2 H(+). Its function is as follows. RuBisCO catalyzes two reactions: the carboxylation of D-ribulose 1,5-bisphosphate, the primary event in carbon dioxide fixation, as well as the oxidative fragmentation of the pentose substrate in the photorespiration process. Both reactions occur simultaneously and in competition at the same active site. This is Ribulose bisphosphate carboxylase large chain (rbcL) from Nemopanthus mucronatus (Catberry).